A 257-amino-acid chain; its full sequence is UPF0246 protein Sama_0917 (257 aa).

This sequence belongs to the UPF0246 family.

The chain is UPF0246 protein Sama_0917 from Shewanella amazonensis (strain ATCC BAA-1098 / SB2B).